Consider the following 155-residue polypeptide: Small ribosomal subunit protein uS9 (155 aa).

The protein belongs to the universal ribosomal protein uS9 family.

The polypeptide is Small ribosomal subunit protein uS9 (Allorhizobium ampelinum (strain ATCC BAA-846 / DSM 112012 / S4) (Agrobacterium vitis (strain S4))).